Reading from the N-terminus, the 819-residue chain is Protein SCARECROW (819 aa).

Disordered regions lie at residues 6–49, 65–136, 212–231, and 393–420; these read LFNG…HSER, HNNN…INNN, SQNN…RNNT, and PLST…TTTT. The segment covering 15-33 has biased composition (low complexity); it reads TTPDETNNNSTSNSSNIST. The span at 79–98 shows a compositional bias: polar residues; the sequence is RTNNTSSLNCSLPATTQKGV. The span at 99–136 shows a compositional bias: low complexity; the sequence is TTTTTTTLASSGNNNNNNNNNNNYHYHNNNNNSIINNN. A coiled-coil region spans residues 418-448; it reads TTTSAELALARKKKEEIKEQKKKDEEGLHLL. Residues 438–806 form the GRAS domain; that stretch reads KKKDEEGLHL…LCLLTASAWR (369 aa). Residues 445–507 are leucine repeat I (LRI); the sequence is LHLLTLLLQC…RLVSSCLGIY (63 aa). A LxCxE motif motif is present at residues 452–456; sequence LQCAE. The tract at residues 526-591 is VHIID; the sequence is FQVFNGISPF…GGPPYVRLTG (66 aa). Positions 557–561 match the VHIID motif; it reads VHIID. Residues 601-633 are leucine repeat II (LRII); that stretch reads ATGKRLSDFANKLGLPFEFFPVAEKVGNIDVEK. The segment at 642–729 is PFYRE; that stretch reads VAVHWLQHSL…QQLLSREIRN (88 aa). Residues 732–806 are SAW; the sequence is AVGGPSRSGE…LCLLTASAWR (75 aa).

This sequence belongs to the GRAS family. Expressed in shoot apical meristem, leaf primordia, between the cortex and the differentiating vessels in lower shoots and in root endodermis.

The protein localises to the nucleus. Its function is as follows. Putative transcription factor involved in asymmetric cell division. The polypeptide is Protein SCARECROW (SCR) (Pisum sativum (Garden pea)).